The following is a 724-amino-acid chain: Pediocin PA-1 transport/processing ATP-binding protein PedD (724 aa).

The Peptidase C39 domain occupies Gln-13 to Ile-140. Cys-19 is a catalytic residue. The next 6 membrane-spanning stretches (helical) occupy residues Ile-170 to Phe-190, Leu-207 to Ile-227, Thr-284 to Tyr-304, Ile-307 to Phe-327, Ile-396 to Val-416, and Leu-426 to Leu-446. In terms of domain architecture, ABC transmembrane type-1 spans Ile-170–Ala-452. An ABC transporter domain is found at Ile-486–Asn-722. Gly-519 to Thr-526 contacts ATP.

The protein belongs to the ABC transporter superfamily. Pediocin PA-1 exporter (TC 3.A.1.112.2) family.

It is found in the cell membrane. In terms of biological role, involved in the export process of the bacteriocin pediocin PA-1/AcH. Is also essential for pediocin production. This is Pediocin PA-1 transport/processing ATP-binding protein PedD (pedD) from Pediococcus acidilactici.